Consider the following 368-residue polypeptide: Serine/threonine-protein kinase CAK1 (368 aa).

One can recognise a Protein kinase domain in the interval 1 to 368; sequence MKLDSIDITH…QRILQELEKP (368 aa). Aspartate 156 acts as the Proton acceptor in catalysis.

Belongs to the protein kinase superfamily. CMGC Ser/Thr protein kinase family. CDC2/CDKX subfamily.

It carries out the reaction L-seryl-[protein] + ATP = O-phospho-L-seryl-[protein] + ADP + H(+). The enzyme catalyses L-threonyl-[protein] + ATP = O-phospho-L-threonyl-[protein] + ADP + H(+). The polypeptide is Serine/threonine-protein kinase CAK1 (CAK1) (Saccharomyces cerevisiae (strain ATCC 204508 / S288c) (Baker's yeast)).